A 354-amino-acid polypeptide reads, in one-letter code: MTDLKNDRYLRALLRQPVDVTPVWMMRQAGRYLPEYKATRAQAGDFMSLCKNAELACEVTLQPLRRYALDAAILFSDILTIPDAMGLGLYFEAGEGPRFHSPITSHADVVNLPIPDPEQELGYVMNAVRTIRKNLAGEVPLIGFSGSPWTLATYMVEGGSSKAFTVIKKMMFAEPKTLHLLLDKLADSVILYLNAQIRAGAQAVMVFDTWGGALSGRDYKEFSLRYMHKIVDGLQRENEGRRVPVTLFTKGGGQWLEAMAETGCDALGLDWTSDIADARRRVGDKVALQGNMDPSMLYADPARIEQEVASILAGFGQGNGHVFNLGHGIHQDVPPEHAGVFVEAVHRLSRPYHA.

Substrate contacts are provided by residues 27–31, aspartate 77, tyrosine 154, threonine 209, and histidine 327; that span reads RQAGR.

This sequence belongs to the uroporphyrinogen decarboxylase family. Homodimer.

The protein resides in the cytoplasm. It carries out the reaction uroporphyrinogen III + 4 H(+) = coproporphyrinogen III + 4 CO2. Its pathway is porphyrin-containing compound metabolism; protoporphyrin-IX biosynthesis; coproporphyrinogen-III from 5-aminolevulinate: step 4/4. In terms of biological role, catalyzes the decarboxylation of four acetate groups of uroporphyrinogen-III to yield coproporphyrinogen-III. The polypeptide is Uroporphyrinogen decarboxylase (Pectobacterium carotovorum subsp. carotovorum (strain PC1)).